A 153-amino-acid chain; its full sequence is 6,7-dimethyl-8-ribityllumazine synthase (153 aa).

5-amino-6-(D-ribitylamino)uracil contacts are provided by residues Phe21, 55 to 57 (AFE), and 79 to 81 (TVI). 84–85 (AT) lines the (2S)-2-hydroxy-3-oxobutyl phosphate pocket. His87 (proton donor) is an active-site residue. Phe112 lines the 5-amino-6-(D-ribitylamino)uracil pocket. Arg126 is a binding site for (2S)-2-hydroxy-3-oxobutyl phosphate.

The protein belongs to the DMRL synthase family. As to quaternary structure, forms an icosahedral capsid composed of 60 subunits, arranged as a dodecamer of pentamers.

The catalysed reaction is (2S)-2-hydroxy-3-oxobutyl phosphate + 5-amino-6-(D-ribitylamino)uracil = 6,7-dimethyl-8-(1-D-ribityl)lumazine + phosphate + 2 H2O + H(+). It participates in cofactor biosynthesis; riboflavin biosynthesis; riboflavin from 2-hydroxy-3-oxobutyl phosphate and 5-amino-6-(D-ribitylamino)uracil: step 1/2. In terms of biological role, catalyzes the formation of 6,7-dimethyl-8-ribityllumazine by condensation of 5-amino-6-(D-ribitylamino)uracil with 3,4-dihydroxy-2-butanone 4-phosphate. This is the penultimate step in the biosynthesis of riboflavin. The polypeptide is 6,7-dimethyl-8-ribityllumazine synthase (Bacillus cereus (strain ATCC 10987 / NRS 248)).